A 105-amino-acid chain; its full sequence is Protein LITTLE ZIPPER 2 (105 aa).

Residues 1 to 20 form a disordered region; the sequence is MCLTTSEPPFPDTDTPTMRS. A coiled-coil region spans residues 39–60; sequence NLTRRRRLLKEQKEMEMRNLKL.

As to quaternary structure, interacts with REV.

Competitive inhibitor of the HD-ZIPIII transcription factors in shoot apical meristem (SAM) development. Acts by forming non-functional heterodimers. Part of a negative feedback loop. Essential for proper functioning of stem cells in the SAM. The sequence is that of Protein LITTLE ZIPPER 2 from Arabidopsis thaliana (Mouse-ear cress).